We begin with the raw amino-acid sequence, 419 residues long: Transcription termination factor Rho (419 aa).

The Rho RNA-BD domain maps to 48–123 (DIFGDGVLEI…LKVNEVNYDK (76 aa)). 3 RNA-binding regions span residues 61-66 (GFGFLR), 78-80 (DIY), and 108-110 (ERY). ATP is bound by residues 169-174 (GRGQRG), 181-186 (KAGKTI), and Arg212. Positions 284-288 (VLTGG) are RNA-binding 2.

It belongs to the Rho family. Homohexamer. The homohexamer assembles into an open ring structure.

Facilitates transcription termination by a mechanism that involves Rho binding to the nascent RNA, activation of Rho's RNA-dependent ATPase activity, and release of the mRNA from the DNA template. In Buchnera aphidicola subsp. Acyrthosiphon pisum (strain APS) (Acyrthosiphon pisum symbiotic bacterium), this protein is Transcription termination factor Rho.